Reading from the N-terminus, the 269-residue chain is Diaminopimelate epimerase (269 aa).

Positions 20 and 63 each coordinate substrate. The active-site Proton donor is the Cys72. Residues 73–74 (GN), Asn179, and 197–198 (ER) contribute to the substrate site. Cys207 functions as the Proton acceptor in the catalytic mechanism. 208-209 (GT) serves as a coordination point for substrate.

Belongs to the diaminopimelate epimerase family. As to quaternary structure, homodimer.

The protein localises to the cytoplasm. The enzyme catalyses (2S,6S)-2,6-diaminopimelate = meso-2,6-diaminopimelate. It participates in amino-acid biosynthesis; L-lysine biosynthesis via DAP pathway; DL-2,6-diaminopimelate from LL-2,6-diaminopimelate: step 1/1. Catalyzes the stereoinversion of LL-2,6-diaminopimelate (L,L-DAP) to meso-diaminopimelate (meso-DAP), a precursor of L-lysine and an essential component of the bacterial peptidoglycan. In Chlamydia muridarum (strain MoPn / Nigg), this protein is Diaminopimelate epimerase.